The following is a 270-amino-acid chain: uncharacterized protein (270 aa).

It belongs to the GSP E family.

This is an uncharacterized protein from Methanocaldococcus jannaschii (strain ATCC 43067 / DSM 2661 / JAL-1 / JCM 10045 / NBRC 100440) (Methanococcus jannaschii).